Consider the following 449-residue polypeptide: Exodeoxyribonuclease 7 large subunit (449 aa).

The protein belongs to the XseA family. As to quaternary structure, heterooligomer composed of large and small subunits.

The protein resides in the cytoplasm. It catalyses the reaction Exonucleolytic cleavage in either 5'- to 3'- or 3'- to 5'-direction to yield nucleoside 5'-phosphates.. In terms of biological role, bidirectionally degrades single-stranded DNA into large acid-insoluble oligonucleotides, which are then degraded further into small acid-soluble oligonucleotides. This is Exodeoxyribonuclease 7 large subunit from Salmonella heidelberg (strain SL476).